The primary structure comprises 386 residues: Succinate--CoA ligase [ADP-forming] subunit beta (386 aa).

The region spanning K9 to A235 is the ATP-grasp domain. Residues K44, G51–G53, A93, and E98 each bind ATP. Mg(2+) is bound by residues N190 and D204. Substrate is bound by residues N255 and G317–T319.

This sequence belongs to the succinate/malate CoA ligase beta subunit family. Heterotetramer of two alpha and two beta subunits. Requires Mg(2+) as cofactor.

It catalyses the reaction succinate + ATP + CoA = succinyl-CoA + ADP + phosphate. The enzyme catalyses GTP + succinate + CoA = succinyl-CoA + GDP + phosphate. Its pathway is carbohydrate metabolism; tricarboxylic acid cycle; succinate from succinyl-CoA (ligase route): step 1/1. Succinyl-CoA synthetase functions in the citric acid cycle (TCA), coupling the hydrolysis of succinyl-CoA to the synthesis of either ATP or GTP and thus represents the only step of substrate-level phosphorylation in the TCA. The beta subunit provides nucleotide specificity of the enzyme and binds the substrate succinate, while the binding sites for coenzyme A and phosphate are found in the alpha subunit. This chain is Succinate--CoA ligase [ADP-forming] subunit beta, found in Nocardioides sp. (strain ATCC BAA-499 / JS614).